Reading from the N-terminus, the 184-residue chain is Thymidine kinase (184 aa).

Residues 9–16 (AAMNSGKS) and 82–85 (DEAQ) each bind ATP. The active-site Proton acceptor is the E83. 4 residues coordinate Zn(2+): C140, C142, C177, and C180.

The protein belongs to the thymidine kinase family. As to quaternary structure, homotetramer.

Its subcellular location is the cytoplasm. It catalyses the reaction thymidine + ATP = dTMP + ADP + H(+). The chain is Thymidine kinase from Chromobacterium violaceum (strain ATCC 12472 / DSM 30191 / JCM 1249 / CCUG 213 / NBRC 12614 / NCIMB 9131 / NCTC 9757 / MK).